The following is a 302-amino-acid chain: Glutaminase (302 aa).

7 residues coordinate substrate: serine 61, asparagine 111, glutamate 155, asparagine 162, tyrosine 186, tyrosine 238, and valine 256.

It belongs to the glutaminase family. In terms of assembly, homotetramer.

It catalyses the reaction L-glutamine + H2O = L-glutamate + NH4(+). This is Glutaminase from Pseudomonas syringae pv. tomato (strain ATCC BAA-871 / DC3000).